The chain runs to 87 residues: MSSLSTSDLASLDDTSKKEIATFLEGENSKQKVQMSIHQFTNICFKKCVESVNDSNLSSQEEQCLSNCVNRFLDTNIRIVNGLQNTR.

A Twin CX3C motif motif is present at residues 44-68 (CFKKCVESVNDSNLSSQEEQCLSNC). 2 disulfides stabilise this stretch: C44-C68 and C48-C64.

Belongs to the small Tim family. In terms of assembly, heterohexamer; composed of 3 copies of TIM8 and 3 copies of TIM13, named soluble 70 kDa complex. Associates with the TIM22 complex, whose core is composed of TIM18, TIM22 and TIM54. Interacts with the transmembrane regions of multi-pass transmembrane proteins in transit.

The protein localises to the mitochondrion inner membrane. It localises to the mitochondrion intermembrane space. Its function is as follows. Mitochondrial intermembrane chaperone that participates in the import and insertion of some multi-pass transmembrane proteins into the mitochondrial inner membrane. Also required for the transfer of beta-barrel precursors from the TOM complex to the sorting and assembly machinery (SAM complex) of the outer membrane. Acts as a chaperone-like protein that protects the hydrophobic precursors from aggregation and guide them through the mitochondrial intermembrane space. The TIM8-TIM13 complex is non essential and only mediates the import of few proteins under precise conditions, while the predominant TIM9-TIM10 70 kDa complex is crucial and mediates the import of much more proteins. Strictly required for import of TIM23 in some conditions, when a low membrane potential exists in the mitochondria. The chain is Mitochondrial import inner membrane translocase subunit TIM8 (TIM8) from Saccharomyces cerevisiae (strain ATCC 204508 / S288c) (Baker's yeast).